The chain runs to 65 residues: UPF0434 protein CC_0108 (65 aa).

Belongs to the UPF0434 family.

This is UPF0434 protein CC_0108 from Caulobacter vibrioides (strain ATCC 19089 / CIP 103742 / CB 15) (Caulobacter crescentus).